We begin with the raw amino-acid sequence, 153 residues long: Cell division protein SepF (153 aa).

The protein belongs to the SepF family. As to quaternary structure, homodimer. Interacts with FtsZ.

It is found in the cytoplasm. Its function is as follows. Cell division protein that is part of the divisome complex and is recruited early to the Z-ring. Probably stimulates Z-ring formation, perhaps through the cross-linking of FtsZ protofilaments. Its function overlaps with FtsA. This Clostridium tetani (strain Massachusetts / E88) protein is Cell division protein SepF.